The primary structure comprises 1204 residues: Erythroid differentiation-related factor 1 (1204 aa).

Disordered regions lie at residues 1-30, 220-264, 483-527, and 586-613; these read MGDA…QAES, QPVS…ASSQ, PKKE…SDDS, and KKES…RGGP. Composition is skewed to low complexity over residues 9-30, 223-241, and 253-263; these read AEGP…QAES, SSTT…NDSE, and SSVSEDPSASS. Positions 496–513 are enriched in acidic residues; that stretch reads NSDESYSEEEEEMPDSDE. TPR repeat units follow at residues 693–726 and 920–953; these read CCLC…QNAN and DIHP…LSRK.

Its subcellular location is the nucleus. Transcription factor involved in erythroid differentiation. Involved in transcriptional activation of the globin gene. This is Erythroid differentiation-related factor 1 (EDRF1) from Pongo abelii (Sumatran orangutan).